Reading from the N-terminus, the 450-residue chain is Glucose-6-phosphate isomerase (450 aa).

The Proton donor role is filled by E291. Active-site residues include H312 and K426.

The protein belongs to the GPI family.

Its subcellular location is the cytoplasm. The catalysed reaction is alpha-D-glucose 6-phosphate = beta-D-fructose 6-phosphate. The protein operates within carbohydrate biosynthesis; gluconeogenesis. It participates in carbohydrate degradation; glycolysis; D-glyceraldehyde 3-phosphate and glycerone phosphate from D-glucose: step 2/4. In terms of biological role, catalyzes the reversible isomerization of glucose-6-phosphate to fructose-6-phosphate. The polypeptide is Glucose-6-phosphate isomerase (Clostridium botulinum (strain Hall / ATCC 3502 / NCTC 13319 / Type A)).